Consider the following 91-residue polypeptide: Small ribosomal subunit protein uS15 (91 aa).

The protein belongs to the universal ribosomal protein uS15 family. As to quaternary structure, part of the 30S ribosomal subunit. Forms a bridge to the 50S subunit in the 70S ribosome, contacting the 23S rRNA.

Its function is as follows. One of the primary rRNA binding proteins, it binds directly to 16S rRNA where it helps nucleate assembly of the platform of the 30S subunit by binding and bridging several RNA helices of the 16S rRNA. Functionally, forms an intersubunit bridge (bridge B4) with the 23S rRNA of the 50S subunit in the ribosome. The protein is Small ribosomal subunit protein uS15 of Synechococcus sp. (strain JA-3-3Ab) (Cyanobacteria bacterium Yellowstone A-Prime).